Reading from the N-terminus, the 201-residue chain is Probable GTP-binding protein EngB (201 aa).

The region spanning 22–197 (RLPEYAFIGR…LDYIDSINQE (176 aa)) is the EngB-type G domain. Residues 30–37 (GRSNVGKS), 57–61 (GKTQL), 75–78 (DLPG), 142–145 (TKAD), and 173–178 (VFITSS) contribute to the GTP site. 2 residues coordinate Mg(2+): Ser-37 and Thr-59.

The protein belongs to the TRAFAC class TrmE-Era-EngA-EngB-Septin-like GTPase superfamily. EngB GTPase family. Requires Mg(2+) as cofactor.

Necessary for normal cell division and for the maintenance of normal septation. The polypeptide is Probable GTP-binding protein EngB (Porphyromonas gingivalis (strain ATCC 33277 / DSM 20709 / CIP 103683 / JCM 12257 / NCTC 11834 / 2561)).